The chain runs to 127 residues: Fumarate reductase subunit C (127 aa).

A run of 3 helical transmembrane segments spans residues Ala-30 to Val-50, Ile-67 to Phe-87, and Ile-107 to Val-127.

This sequence belongs to the FrdC family. Part of an enzyme complex containing four subunits: a flavoprotein (FrdA), an iron-sulfur protein (FrdB), and two hydrophobic anchor proteins (FrdC and FrdD).

It localises to the cell inner membrane. Anchors the catalytic components of the fumarate reductase complex to the cell membrane, binds quinones. This chain is Fumarate reductase subunit C, found in Photobacterium profundum (strain SS9).